A 164-amino-acid polypeptide reads, in one-letter code: 3-isopropylmalate dehydratase small subunit 2 (164 aa).

The protein belongs to the LeuD family. LeuD type 2 subfamily. As to quaternary structure, heterodimer of LeuC and LeuD.

The catalysed reaction is (2R,3S)-3-isopropylmalate = (2S)-2-isopropylmalate. The protein operates within amino-acid biosynthesis; L-leucine biosynthesis; L-leucine from 3-methyl-2-oxobutanoate: step 2/4. Its function is as follows. Catalyzes the isomerization between 2-isopropylmalate and 3-isopropylmalate, via the formation of 2-isopropylmaleate. The protein is 3-isopropylmalate dehydratase small subunit 2 (leuD2) of Pyrococcus furiosus (strain ATCC 43587 / DSM 3638 / JCM 8422 / Vc1).